A 288-amino-acid chain; its full sequence is Bis(5'-nucleosyl)-tetraphosphatase, symmetrical (288 aa).

Belongs to the Ap4A hydrolase family.

It carries out the reaction P(1),P(4)-bis(5'-adenosyl) tetraphosphate + H2O = 2 ADP + 2 H(+). Functionally, hydrolyzes diadenosine 5',5'''-P1,P4-tetraphosphate to yield ADP. This chain is Bis(5'-nucleosyl)-tetraphosphatase, symmetrical, found in Pseudomonas putida (strain W619).